The following is a 177-amino-acid chain: Large ribosomal subunit protein uL10 (177 aa).

The protein belongs to the universal ribosomal protein uL10 family. In terms of assembly, part of the ribosomal stalk of the 50S ribosomal subunit. The N-terminus interacts with L11 and the large rRNA to form the base of the stalk. The C-terminus forms an elongated spine to which L12 dimers bind in a sequential fashion forming a multimeric L10(L12)X complex.

In terms of biological role, forms part of the ribosomal stalk, playing a central role in the interaction of the ribosome with GTP-bound translation factors. The polypeptide is Large ribosomal subunit protein uL10 (Caldanaerobacter subterraneus subsp. tengcongensis (strain DSM 15242 / JCM 11007 / NBRC 100824 / MB4) (Thermoanaerobacter tengcongensis)).